The primary structure comprises 671 residues: DNA ligase (671 aa).

NAD(+) contacts are provided by residues Asp32–Asp36, Ser81–Leu82, and Glu113. Residue Lys115 is the N6-AMP-lysine intermediate of the active site. NAD(+) contacts are provided by Arg136, Glu173, Lys290, and Lys314. 4 residues coordinate Zn(2+): Cys408, Cys411, Cys426, and Cys432. Residues Glu593–Ala671 enclose the BRCT domain.

Belongs to the NAD-dependent DNA ligase family. LigA subfamily. Mg(2+) serves as cofactor. Requires Mn(2+) as cofactor.

It catalyses the reaction NAD(+) + (deoxyribonucleotide)n-3'-hydroxyl + 5'-phospho-(deoxyribonucleotide)m = (deoxyribonucleotide)n+m + AMP + beta-nicotinamide D-nucleotide.. In terms of biological role, DNA ligase that catalyzes the formation of phosphodiester linkages between 5'-phosphoryl and 3'-hydroxyl groups in double-stranded DNA using NAD as a coenzyme and as the energy source for the reaction. It is essential for DNA replication and repair of damaged DNA. The protein is DNA ligase of Salmonella schwarzengrund (strain CVM19633).